The chain runs to 176 residues: 2-C-methyl-D-erythritol 2,4-cyclodiphosphate synthase (176 aa).

A divalent metal cation is bound by residues D23, H25, and H60. Position 23–25 (23–25 (DSH)) interacts with 4-CDP-2-C-methyl-D-erythritol 2-phosphate. A 4-CDP-2-C-methyl-D-erythritol 2-phosphate-binding site is contributed by 149-152 (TSGE).

Belongs to the IspF family. As to quaternary structure, homotrimer. It depends on a divalent metal cation as a cofactor.

It catalyses the reaction 4-CDP-2-C-methyl-D-erythritol 2-phosphate = 2-C-methyl-D-erythritol 2,4-cyclic diphosphate + CMP. Its pathway is isoprenoid biosynthesis; isopentenyl diphosphate biosynthesis via DXP pathway; isopentenyl diphosphate from 1-deoxy-D-xylulose 5-phosphate: step 4/6. Involved in the biosynthesis of isopentenyl diphosphate (IPP) and dimethylallyl diphosphate (DMAPP), two major building blocks of isoprenoid compounds. Catalyzes the conversion of 4-diphosphocytidyl-2-C-methyl-D-erythritol 2-phosphate (CDP-ME2P) to 2-C-methyl-D-erythritol 2,4-cyclodiphosphate (ME-CPP) with a corresponding release of cytidine 5-monophosphate (CMP). The chain is 2-C-methyl-D-erythritol 2,4-cyclodiphosphate synthase from Chlamydia caviae (strain ATCC VR-813 / DSM 19441 / 03DC25 / GPIC) (Chlamydophila caviae).